The following is a 171-amino-acid chain: S-ribosylhomocysteine lyase (171 aa).

Histidine 54, histidine 58, and cysteine 128 together coordinate Fe cation.

This sequence belongs to the LuxS family. As to quaternary structure, homodimer. Fe cation is required as a cofactor.

It carries out the reaction S-(5-deoxy-D-ribos-5-yl)-L-homocysteine = (S)-4,5-dihydroxypentane-2,3-dione + L-homocysteine. Functionally, involved in the synthesis of autoinducer 2 (AI-2) which is secreted by bacteria and is used to communicate both the cell density and the metabolic potential of the environment. The regulation of gene expression in response to changes in cell density is called quorum sensing. Catalyzes the transformation of S-ribosylhomocysteine (RHC) to homocysteine (HC) and 4,5-dihydroxy-2,3-pentadione (DPD). The polypeptide is S-ribosylhomocysteine lyase (Salmonella arizonae (strain ATCC BAA-731 / CDC346-86 / RSK2980)).